Here is a 3498-residue protein sequence, read N- to C-terminus: Mediator of RNA polymerase II transcription subunit 12 (3498 aa).

Disordered stretches follow at residues 365–456, 497–764, 2209–2576, 2589–2620, 2637–2889, and 2917–3498; these read IKQH…HTDI, GGVG…EPEK, AKKR…AYMK, ENNRIMEEQQREREMEAARKEAARRAAEEAYA, LRKE…KEKQ, and NVAG…PNQY. Over residues 368–394 the composition is skewed to basic residues; it reads HEKRKAGSLKKSERRRRRGLSKNRPKK. Basic and acidic residues predominate over residues 404 to 416; that stretch reads SLDHDKVQIKQEP. Polar residues-rich tracts occupy residues 424–440 and 512–536; these read GQQSDNSMDYDSFSHQY and SNPTPTETVNTQPQIDFESSPSASP. Positions 539–570 form a coiled coil; the sequence is SVDKENECEKKEDESKTKEKNKDKEKDKEKEK. Basic and acidic residues-rich tracts occupy residues 540–578 and 593–614; these read VDKENECEKKEDESKTKEKNKDKEKDKEKEKSVDEHTND and ANDKTDASEKQKLVEEEPTGKE. Low complexity predominate over residues 621–630; it reads SKTAKTSTSA. Composition is skewed to basic and acidic residues over residues 691-719, 738-764, and 2209-2285; these read EVDKAPEVDKSEKEHEDDIMIIESNKKAD, ESEKKKDGEEERDKNKDTDVADNEPEK, and AKKR…KRAS. A required for nuclear localization region spans residues 2142 to 3498; that stretch reads QTTRLDKVAK…YPNQQPPNQY (1357 aa). Residues 2203 to 2290 are a coiled coil; it reads VIDEEEAKKR…EKRASDAAAA (88 aa). Composition is skewed to low complexity over residues 2342-2360 and 2409-2431; these read RADTAQAAAATTQWNAPIA and LADASAAAAAANSNAMGNTSSMP. Residues 2395–2420 are a coiled coil; that stretch reads RNLLNRKKEEKRNSLADASAAAAAAN. Positions 2444–2456 are enriched in polar residues; sequence QSAGATQQLQGMQ. A compositionally biased stretch (low complexity) spans 2459–2479; it reads QMGGSMSGMNQNMGGMNQSMS. A compositionally biased stretch (polar residues) spans 2514–2530; sequence NRSSGPVSSETRQQIME. Basic and acidic residues-rich tracts occupy residues 2547–2576, 2589–2616, and 2637–2724; these read QKQRDAREREAREREAREHQERMQREAYMK, ENNRIMEEQQREREMEAARKEAARRAAE, and LRKE…EQQR. The segment covering 2725-2770 has biased composition (low complexity); it reads RSQQNPYMNQQGQYSQQPPPSYQQSSYPNNYQPGQQGNQPPNYQQP. Positions 2771–2783 are enriched in polar residues; the sequence is SHQSMQQGHQAGY. The segment covering 2784 to 2810 has biased composition (low complexity); that stretch reads QQTSNQMQMNMQQQQNRQQGGPQQSFS. Polar residues-rich tracts occupy residues 2816 to 2827, 2842 to 2852, 2868 to 2881, and 2926 to 2956; these read NQPSQPGYSGYN, RNPFGNQQDMQ, HAQQYQHTQNQLSL, and GQQQLGASDQMGTSQLPGASTSRMNQGSSNP. Low complexity predominate over residues 2957–2993; that stretch reads QGGMQSYQQQQPVLGQPGPIQTGQSTQQQIPAQSQQQ. Polar residues predominate over residues 2994-3009; it reads YNSGRPQMHTTPTKND. Positions 3039-3100 are enriched in low complexity; the sequence is GQNVPGGYQQ…NVSQSQSAAQ (62 aa). Polar residues predominate over residues 3103–3127; it reads RPSQDSAYQQSGYNQTGNQSYQRPD. 2 stretches are compositionally biased toward low complexity: residues 3128 to 3184 and 3192 to 3223; these read QQQQ…SAQY and QGYDQQQQGQIAPQQAQNPQASQSYGQQQTQQ. The span at 3231-3253 shows a compositional bias: polar residues; sequence SGYTANSGGSSNILNQSMEESGL. A compositionally biased stretch (low complexity) spans 3254 to 3311; the sequence is NQGFSGASSNASSQQGGSSQMQQSGYGMPGNQMQMQQNQKQQVQRGMPTGMGQTNMGQ. Positions 3312–3321 are enriched in gly residues; the sequence is SGMGQSGMGQ. Composition is skewed to low complexity over residues 3336–3356 and 3370–3408; these read QGQQSQQPQQPQVSQQQNQRG and QQQHQPQQSQISQQQQQQDQYRRMQAAQMQQQPTAQGQQ. The span at 3414 to 3425 shows a compositional bias: polar residues; the sequence is PSQQQSGAAYSN. Low complexity predominate over residues 3426 to 3436; the sequence is QMQFQGVRQGQ. Gly residues predominate over residues 3437–3446; it reads QGMGGMGGSG. Low complexity predominate over residues 3447–3498; it reads QQQPQTQPHGSNQYYQQQQDQRMQQQPQQPGQQQQHGYGMGQYPNQQPPNQY.

Belongs to the Mediator complex subunit 12 family. In terms of assembly, component of the Mediator complex. Ubiquitously expressed.

The protein localises to the nucleus. Its function is as follows. Component of the Mediator complex, a coactivator involved in regulated gene transcription of nearly all RNA polymerase II-dependent genes. Mediator functions as a bridge to convey information from gene-specific regulatory proteins to the basal RNA polymerase II transcription machinery. Mediator is recruited to promoters by direct interactions with regulatory proteins and serves as a scaffold for the assembly of a functional preinitiation complex with RNA polymerase II and the general transcription factors. Functions downstream of let-60 during vulval induction. Required for asymmetric division of T-cells and for hypodermal development. This is Mediator of RNA polymerase II transcription subunit 12 (dpy-22) from Caenorhabditis elegans.